The following is a 350-amino-acid chain: Quinolinate phosphoribosyltransferase [decarboxylating] 1b (350 aa).

Residues arginine 141, 172 to 174 (TRK), arginine 196, lysine 206, glutamate 239, aspartate 266, 298 to 300 (SGN), and 319 to 321 (SGA) each bind substrate.

This sequence belongs to the NadC/ModD family.

It carries out the reaction nicotinate beta-D-ribonucleotide + CO2 + diphosphate = quinolinate + 5-phospho-alpha-D-ribose 1-diphosphate + 2 H(+). The protein operates within alkaloid biosynthesis; nicotine biosynthesis. It functions in the pathway cofactor biosynthesis; NAD(+) biosynthesis; nicotinate D-ribonucleotide from quinolinate: step 1/1. Functionally, involved in the biosynthesis of pyridine alkaloid natural products, leading mainly to the production of anabasine, anatabine, nicotine and nornicotine, effective deterrents against herbivores with antiparasitic and pesticide properties (neurotoxins); nornicotine serves as the precursor in the synthesis of the carcinogen compound N'-nitrosonornicotine (NNN). Involved in the catabolism of quinolinic acid (QA). In Nicotiana tabacum (Common tobacco), this protein is Quinolinate phosphoribosyltransferase [decarboxylating] 1b.